Reading from the N-terminus, the 245-residue chain is Probable membrane transporter protein YdhB (245 aa).

Transmembrane regions (helical) follow at residues 1-21 (MLIILVMFLLGIILGFIGAGG), 34-56 (HIPIHTALGTSLAGMAFTSLSGA), 71-91 (LIVGGFAAVGSFFGAKLTSFI), 98-118 (YLTAGMLFLSAILILIRLFIL), 137-157 (ILGIAAGVLSGTFGIGSAPFI), 177-197 (MLVIIPLAVGGGIGYITEGFV), 199-219 (YVLLVKVLVGTMCGAYVGAKF), and 225-245 (KVVLKSAIFLTPAIAGLLLLF).

It belongs to the 4-toluene sulfonate uptake permease (TSUP) (TC 2.A.102) family.

It localises to the cell membrane. In Bacillus subtilis (strain 168), this protein is Probable membrane transporter protein YdhB (ydhB).